A 158-amino-acid chain; its full sequence is Small ribosomal subunit protein uS7 (158 aa).

This sequence belongs to the universal ribosomal protein uS7 family. As to quaternary structure, part of the 30S ribosomal subunit. Contacts proteins S9 and S11.

Functionally, one of the primary rRNA binding proteins, it binds directly to 16S rRNA where it nucleates assembly of the head domain of the 30S subunit. Is located at the subunit interface close to the decoding center, probably blocks exit of the E-site tRNA. In Bacteroides fragilis (strain YCH46), this protein is Small ribosomal subunit protein uS7.